The following is a 275-amino-acid chain: Formamidopyrimidine-DNA glycosylase (275 aa).

The active-site Schiff-base intermediate with DNA is the P2. E3 serves as the catalytic Proton donor. K58 (proton donor; for beta-elimination activity) is an active-site residue. The DNA site is built by H93, R111, and R156. An FPG-type zinc finger spans residues 241–275 (FVYDRAGQPCRVCGTPVRQIVQGQRSTYFCPTCQR). R265 functions as the Proton donor; for delta-elimination activity in the catalytic mechanism.

This sequence belongs to the FPG family. In terms of assembly, monomer. The cofactor is Zn(2+).

The catalysed reaction is Hydrolysis of DNA containing ring-opened 7-methylguanine residues, releasing 2,6-diamino-4-hydroxy-5-(N-methyl)formamidopyrimidine.. It catalyses the reaction 2'-deoxyribonucleotide-(2'-deoxyribose 5'-phosphate)-2'-deoxyribonucleotide-DNA = a 3'-end 2'-deoxyribonucleotide-(2,3-dehydro-2,3-deoxyribose 5'-phosphate)-DNA + a 5'-end 5'-phospho-2'-deoxyribonucleoside-DNA + H(+). Functionally, involved in base excision repair of DNA damaged by oxidation or by mutagenic agents. Acts as a DNA glycosylase that recognizes and removes damaged bases. Has a preference for oxidized purines, such as 7,8-dihydro-8-oxoguanine (8-oxoG). Has AP (apurinic/apyrimidinic) lyase activity and introduces nicks in the DNA strand. Cleaves the DNA backbone by beta-delta elimination to generate a single-strand break at the site of the removed base with both 3'- and 5'-phosphates. The protein is Formamidopyrimidine-DNA glycosylase of Burkholderia cenocepacia (strain HI2424).